The following is a 240-amino-acid chain: Ion-translocating oxidoreductase complex subunit E (240 aa).

5 helical membrane-spanning segments follow: residues 41-61, 71-91, 95-115, 130-150, and 184-204; these read LGLGLATMLVLACSNAAVSLV, LPAFVMIIAVLTTCIELLMQA, ELYQVLGIFIPLITTNCVILG, SFDGLLMGLGFALVLLVLGGL, and GFLLAILPPGAFIMLGLLIAL.

It belongs to the NqrDE/RnfAE family. In terms of assembly, the complex is composed of six subunits: RnfA, RnfB, RnfC, RnfD, RnfE and RnfG.

The protein resides in the cell inner membrane. Functionally, part of a membrane-bound complex that couples electron transfer with translocation of ions across the membrane. This is Ion-translocating oxidoreductase complex subunit E from Pseudomonas aeruginosa (strain ATCC 15692 / DSM 22644 / CIP 104116 / JCM 14847 / LMG 12228 / 1C / PRS 101 / PAO1).